Here is a 202-residue protein sequence, read N- to C-terminus: Protein-methionine-sulfoxide reductase heme-binding subunit MsrQ (202 aa).

The next 6 membrane-spanning stretches (helical) occupy residues 8-28 (LAVF…AWIF), 42-62 (LGLG…LQKL), 75-95 (LGLW…VFIL), 110-130 (PYII…ITSN), 147-167 (LVYL…RADL), and 169-189 (EWTL…PSIA).

Belongs to the MsrQ family. Heterodimer of a catalytic subunit (MsrP) and a heme-binding subunit (MsrQ). Requires FMN as cofactor. It depends on heme b as a cofactor.

It localises to the cell inner membrane. Functionally, part of the MsrPQ system that repairs oxidized periplasmic proteins containing methionine sulfoxide residues (Met-O), using respiratory chain electrons. Thus protects these proteins from oxidative-stress damage caused by reactive species of oxygen and chlorine generated by the host defense mechanisms. MsrPQ is essential for the maintenance of envelope integrity under bleach stress, rescuing a wide series of structurally unrelated periplasmic proteins from methionine oxidation. MsrQ provides electrons for reduction to the reductase catalytic subunit MsrP, using the quinone pool of the respiratory chain. The polypeptide is Protein-methionine-sulfoxide reductase heme-binding subunit MsrQ (Pseudomonas aeruginosa (strain LESB58)).